The chain runs to 545 residues: Ribulokinase (545 aa).

Belongs to the ribulokinase family.

It carries out the reaction D-ribulose + ATP = D-ribulose 5-phosphate + ADP + H(+). It catalyses the reaction L-ribulose + ATP = L-ribulose 5-phosphate + ADP + H(+). It participates in carbohydrate degradation; L-arabinose degradation via L-ribulose; D-xylulose 5-phosphate from L-arabinose (bacterial route): step 2/3. The polypeptide is Ribulokinase (Staphylococcus aureus (strain bovine RF122 / ET3-1)).